Here is an 88-residue protein sequence, read N- to C-terminus: UPF0297 protein BLi02868/BL02032 (88 aa).

This sequence belongs to the UPF0297 family.

The sequence is that of UPF0297 protein BLi02868/BL02032 from Bacillus licheniformis (strain ATCC 14580 / DSM 13 / JCM 2505 / CCUG 7422 / NBRC 12200 / NCIMB 9375 / NCTC 10341 / NRRL NRS-1264 / Gibson 46).